Consider the following 156-residue polypeptide: Arginine repressor (156 aa).

It belongs to the ArgR family.

The protein localises to the cytoplasm. It functions in the pathway amino-acid biosynthesis; L-arginine biosynthesis [regulation]. Its function is as follows. Regulates arginine biosynthesis genes. This is Arginine repressor from Photorhabdus laumondii subsp. laumondii (strain DSM 15139 / CIP 105565 / TT01) (Photorhabdus luminescens subsp. laumondii).